A 220-amino-acid chain; its full sequence is Charged multivesicular body protein 4b (220 aa).

Disordered regions lie at residues 1–22 (MSLFGKMFGSGGKGGKSASPQE) and 180–220 (EIGD…WAAN). Coiled coils occupy residues 21–88 (QEAI…STIE) and 123–181 (IDKV…LLEI).

Belongs to the SNF7 family. In terms of assembly, probable core component of the endosomal sorting required for transport complex III (ESCRT-III). ESCRT-III components are thought to multimerize to form a flat lattice on the perimeter membrane of the endosome.

The protein localises to the cytoplasm. It localises to the cytosol. The protein resides in the late endosome membrane. It is found in the midbody. Functionally, probable core component of the endosomal sorting required for transport complex III (ESCRT-III) which is involved in multivesicular bodies (MVBs) formation and sorting of endosomal cargo proteins into MVBs. MVBs contain intraluminal vesicles (ILVs) that are generated by invagination and scission from the limiting membrane of the endosome and mostly are delivered to lysosomes enabling degradation of membrane proteins, such as stimulated growth factor receptors, lysosomal enzymes and lipids. The sequence is that of Charged multivesicular body protein 4b (chmp4b) from Danio rerio (Zebrafish).